The primary structure comprises 159 residues: Endoribonuclease YbeY (159 aa).

His-124, His-128, and His-134 together coordinate Zn(2+).

This sequence belongs to the endoribonuclease YbeY family. Zn(2+) serves as cofactor.

The protein resides in the cytoplasm. Single strand-specific metallo-endoribonuclease involved in late-stage 70S ribosome quality control and in maturation of the 3' terminus of the 16S rRNA. The sequence is that of Endoribonuclease YbeY from Halalkalibacterium halodurans (strain ATCC BAA-125 / DSM 18197 / FERM 7344 / JCM 9153 / C-125) (Bacillus halodurans).